The primary structure comprises 635 residues: Threonine--tRNA ligase (635 aa).

The region spanning 1–61 (MITVRLPDGS…EKDSDLAIIT (61 aa)) is the TGS domain. Residues 242-533 (DHRKLGKQLD…LIEHYAGALP (292 aa)) are catalytic. Residues C333, H384, and H510 each contribute to the Zn(2+) site.

Belongs to the class-II aminoacyl-tRNA synthetase family. Homodimer. The cofactor is Zn(2+).

Its subcellular location is the cytoplasm. The catalysed reaction is tRNA(Thr) + L-threonine + ATP = L-threonyl-tRNA(Thr) + AMP + diphosphate + H(+). Functionally, catalyzes the attachment of threonine to tRNA(Thr) in a two-step reaction: L-threonine is first activated by ATP to form Thr-AMP and then transferred to the acceptor end of tRNA(Thr). Also edits incorrectly charged L-seryl-tRNA(Thr). In Janthinobacterium sp. (strain Marseille) (Minibacterium massiliensis), this protein is Threonine--tRNA ligase.